Reading from the N-terminus, the 187-residue chain is Corticoliberin (187 aa).

Positions 1–24 are cleaved as a signal peptide; that stretch reads MRLRLLVSAGMLLVALSPCLPCRA. Positions 25-144 are excised as a propeptide; the sequence is LLSRGSVSGA…HQGALERERR (120 aa). Residues 75–95 are disordered; that stretch reads AARLSPNSTPLTAGRGSRPSH. Ile-185 bears the Isoleucine amide mark.

This sequence belongs to the sauvagine/corticotropin-releasing factor/urotensin I family. In terms of assembly, interacts (via C-terminus) with CRFR1 (via N-terminal extracellular domain). In terms of tissue distribution, produced by the hypothalamus.

It is found in the secreted. Hormone regulating the release of corticotropin from pituitary gland. Induces NLRP6 in intestinal epithelial cells, hence may influence gut microbiota profile. In Rattus norvegicus (Rat), this protein is Corticoliberin (Crh).